Reading from the N-terminus, the 115-residue chain is Large ribosomal subunit protein bL20 (115 aa).

It belongs to the bacterial ribosomal protein bL20 family.

Its function is as follows. Binds directly to 23S ribosomal RNA and is necessary for the in vitro assembly process of the 50S ribosomal subunit. It is not involved in the protein synthesizing functions of that subunit. The sequence is that of Large ribosomal subunit protein bL20 from Prochlorococcus marinus (strain MIT 9303).